We begin with the raw amino-acid sequence, 181 residues long: Adenylyl-sulfate kinase (181 aa).

Position 20–27 (20–27 (GLSGAGKS)) interacts with ATP. Residue Ser94 is the Phosphoserine intermediate of the active site.

Belongs to the APS kinase family.

It carries out the reaction adenosine 5'-phosphosulfate + ATP = 3'-phosphoadenylyl sulfate + ADP + H(+). The protein operates within sulfur metabolism; hydrogen sulfide biosynthesis; sulfite from sulfate: step 2/3. Catalyzes the synthesis of activated sulfate. This is Adenylyl-sulfate kinase from Deinococcus geothermalis (strain DSM 11300 / CIP 105573 / AG-3a).